The primary structure comprises 1315 residues: Chaoptin (1315 aa).

An N-terminal signal peptide occupies residues 1-29 (MGLEFFFKFGYAFLTITLMIMIWMSLARA). Asn77 carries N-linked (GlcNAc...) (high mannose) asparagine; alternate glycosylation. Asn77 carries N-linked (GlcNAc...) (paucimannose) asparagine; alternate glycosylation. 9 LRR repeats span residues 80–101 (KVFM…FLQS), 103–124 (GMYR…AFTG), 128–149 (SLWE…SLRH), 152–173 (KLRH…SFRG), 177–198 (SLQT…SFSG), 201–222 (ILET…VFVD), 226–247 (RLTR…ALGP), 250–271 (SLRT…ETYE), and 279–300 (NLDN…SFKY). A glycan (N-linked (GlcNAc...) (paucimannose) asparagine; alternate) is linked at Asn267. Asn267 is a glycosylation site (N-linked (GlcNAc...) (complex) asparagine; alternate). N-linked (GlcNAc...) (high mannose) asparagine; alternate glycosylation occurs at Asn305. The N-linked (GlcNAc...) (paucimannose) asparagine; alternate glycan is linked to Asn305. LRR repeat units lie at residues 326 to 347 (RIRE…AFDS), 351 to 372 (SLQI…LFNN), 375 to 396 (VLRV…ETFN), 401 to 424 (TLLK…RNMT), 477 to 498 (GLKR…AFHE), 527 to 548 (SLQE…SFHF), 551 to 572 (NLRL…TFQG), 577 to 598 (KLEE…TFFD), 601 to 622 (ALRK…AFMN), 625 to 646 (ELEY…SFQN), 649 to 670 (KLEI…YFDQ), 676 to 696 (NLNV…SSWS), 708 to 729 (NIKI…YFRP), 733 to 754 (SLTH…VFGN), 757 to 778 (HLQW…AFKN), 781 to 802 (QLQL…IFKP), 805 to 826 (GLRI…LFYN), 828 to 849 (GMEK…SLSS), 854 to 875 (TLCE…DLSN), 879 to 900 (SLRY…VFAT), 903 to 924 (KLAV…SFMG), 928 to 948 (SLIK…IRLK), 949 to 970 (YLRE…LAHN), 973 to 994 (NLRM…TQAL), 996 to 1017 (HLRR…SFDG), 1021 to 1044 (DLEM…DSLP), and 1045 to 1066 (HLRS…PHLL). Asn361 carries an N-linked (GlcNAc...) (high mannose) asparagine glycan. The N-linked (GlcNAc...) asparagine glycan is linked to Asn422. Asn680 carries N-linked (GlcNAc...) (high mannose) asparagine glycosylation. N-linked (GlcNAc...) (high mannose) asparagine; alternate glycosylation is present at Asn692. N-linked (GlcNAc...) (paucimannose) asparagine; alternate glycosylation occurs at Asn692. N-linked (GlcNAc...) (high mannose) asparagine glycosylation is present at Asn718. An N-linked (GlcNAc...) asparagine glycan is attached at Asn746. Asn936 is a glycosylation site (N-linked (GlcNAc...) (high mannose) asparagine). Asn970 carries N-linked (GlcNAc...) (paucimannose) asparagine glycosylation. Asn1012 carries an N-linked (GlcNAc...) (complex) asparagine glycan. N-linked (GlcNAc...) (high mannose) asparagine glycans are attached at residues Asn1122, Asn1152, and Asn1171. The LRRCT domain occupies 1211–1274 (TDLNCDCDLG…DDLRETRCEN (64 aa)).

This sequence belongs to the chaoptin family. As to expression, expressed in photoreceptor cells and their axons in the adult retina, the ocellus and larval photoreceptor organ.

It localises to the cell membrane. Its function is as follows. Required for photoreceptor cell morphogenesis. Mediates homophilic cellular adhesion. This is Chaoptin (chp) from Drosophila melanogaster (Fruit fly).